The primary structure comprises 467 residues: Glycine--tRNA ligase (467 aa).

Substrate contacts are provided by arginine 100 and glutamate 175. ATP contacts are provided by residues 207-209 (RNE), 217-222 (FRTREF), 291-292 (EL), and 335-338 (GADR). 222 to 226 (FEQME) contacts substrate. 331–335 (EPSLG) provides a ligand contact to substrate.

Belongs to the class-II aminoacyl-tRNA synthetase family. As to quaternary structure, homodimer.

The protein localises to the cytoplasm. The catalysed reaction is tRNA(Gly) + glycine + ATP = glycyl-tRNA(Gly) + AMP + diphosphate. Its function is as follows. Catalyzes the attachment of glycine to tRNA(Gly). The chain is Glycine--tRNA ligase from Clostridium perfringens (strain 13 / Type A).